A 295-amino-acid polypeptide reads, in one-letter code: Bifunctional protein FolD (295 aa).

Residues 175 to 177 and Ile-243 each bind NADP(+); that span reads GVS.

The protein belongs to the tetrahydrofolate dehydrogenase/cyclohydrolase family. Homodimer.

It carries out the reaction (6R)-5,10-methylene-5,6,7,8-tetrahydrofolate + NADP(+) = (6R)-5,10-methenyltetrahydrofolate + NADPH. The enzyme catalyses (6R)-5,10-methenyltetrahydrofolate + H2O = (6R)-10-formyltetrahydrofolate + H(+). Its pathway is one-carbon metabolism; tetrahydrofolate interconversion. Its function is as follows. Catalyzes the oxidation of 5,10-methylenetetrahydrofolate to 5,10-methenyltetrahydrofolate and then the hydrolysis of 5,10-methenyltetrahydrofolate to 10-formyltetrahydrofolate. The chain is Bifunctional protein FolD from Xylella fastidiosa (strain 9a5c).